Here is a 162-residue protein sequence, read N- to C-terminus: RNA pyrophosphohydrolase (162 aa).

Residues Glu7–Glu149 enclose the Nudix hydrolase domain. The short motif at Gly40–Gly61 is the Nudix box element.

The protein belongs to the Nudix hydrolase family. RppH subfamily. It depends on a divalent metal cation as a cofactor.

Its function is as follows. Accelerates the degradation of transcripts by removing pyrophosphate from the 5'-end of triphosphorylated RNA, leading to a more labile monophosphorylated state that can stimulate subsequent ribonuclease cleavage. The polypeptide is RNA pyrophosphohydrolase (Wolbachia pipientis subsp. Culex pipiens (strain wPip)).